The primary structure comprises 512 residues: Ferrochelatase-2, chloroplastic (512 aa).

Residues 1–32 (MNCPAMTASPSSSSSSSYSTFRPPPPLLPQLS) are disordered. The transit peptide at 1–83 (MNCPAMTASP…SNPLNISSSS (83 aa)) directs the protein to the chloroplast. Positions 9-21 (SPSSSSSSSYSTF) are enriched in low complexity. V84 carries the N-acetylvaline modification.

Belongs to the ferrochelatase family. In terms of tissue distribution, expressed in leaves and flowers.

The protein resides in the plastid. The protein localises to the chloroplast membrane. Its subcellular location is the chloroplast thylakoid membrane. It carries out the reaction heme b + 2 H(+) = protoporphyrin IX + Fe(2+). It functions in the pathway porphyrin-containing compound metabolism; protoheme biosynthesis; protoheme from protoporphyrin-IX: step 1/1. Catalyzes the last step of heme biosynthesis by inserting ferrous iron into protoporphyrin IX to produce protoheme. Produces heme for photosynthetic cytochromes, and for proteins involved in abiotic and biotic stress responses. May play a role in the quality control of individual chloroplasts during photo-oxidative stress through regulation of heme biosynthesis. The protein is Ferrochelatase-2, chloroplastic of Arabidopsis thaliana (Mouse-ear cress).